Consider the following 525-residue polypeptide: Neutrophil cytosol factor 2 (525 aa).

TPR repeat units lie at residues 37-70 (SRIC…DKHS), 71-104 (AVAY…LRGN), and 121-154 (CEVL…KSEP). Thr233 bears the Phosphothreonine mark. One can recognise an SH3 1 domain in the interval 240 to 299 (LEGEAHRVLFGFVPETPEELQVMPGNIVFVLKKGSDNWATVMFNGQKGLVPCNYLEPVEL). The disordered stretch occupies residues 304-343 (QSQPQEDTSPESDIPPPPNSSPPGRLQLSPGHKQKEPKEL). A phosphoserine mark is found at Ser324 and Ser398. Residues 350 to 428 (PYMLKVHYKY…YCLTLWCEHT (79 aa)) enclose the PB1 domain. The segment at 437–457 (EPIQRENSDASKQTTEPQPKE) is disordered. Residues 456–515 (KEGTQVVAIFSYEAAQPEDLEFVEGDVILVLSHVNEEWLEGECKGKVGIFPKAFVEGCAA) enclose the SH3 2 domain.

It belongs to the NCF2/NOXA1 family. In terms of assembly, component of the phagocyte NADPH oxidase complex composed of an obligatory core heterodimer formed by the membrane proteins CYBA and CYBB and the cytosolic regulatory subunits NCF1/p47-phox, NCF2/p67-phox, NCF4/p40-phox and the small GTPase RAC1 or RAC2. Part of a cytosolic complex composed at least by NCF1, NCF2 and NCF4. Interacts with NCF4. Interacts (via the C-terminal SH3 domain) with NCF1 (via C-terminus). Interacts with SYTL1 and RAC1. May interact with NOXO1. Interacts with S100A8 and calprotectin (S100A8/9). Interacts with GBP7 (via GB1/RHD3-type G domain). Interacts with CYBB; the interaction is enhanced in the presence of GBP7.

Its subcellular location is the cytoplasm. Its function is as follows. NCF2, NCF1, and a membrane bound cytochrome b558 are required for activation of the latent NADPH oxidase (necessary for superoxide production). In terms of biological role, subunit of the phagocyte NADPH oxidase complex that mediates the transfer of electrons from cytosolic NADPH to O2 to produce the superoxide anion (O2(-)). In the activated complex, electrons are first transferred from NADPH to flavin adenine dinucleotide (FAD) and subsequently transferred via two heme molecules to molecular oxygen, producing superoxide through an outer-sphere reaction. Activation of the NADPH oxidase complex is initiated by the assembly of cytosolic subunits of the NADPH oxidase complex with the core NADPH oxidase complex to form a complex at the plasma membrane or phagosomal membrane. This activation process is initiated by phosphorylation dependent binding of the cytosolic NCF1/p47-phox subunit to the C-terminus of CYBA/p22-phox. The sequence is that of Neutrophil cytosol factor 2 from Mus musculus (Mouse).